The sequence spans 276 residues: Sec-independent protein translocase protein TatC (276 aa).

Residues 1 to 29 (MVSLTSVPPYADATPDTRASSGPAPGRRK) form a disordered region. A run of 6 helical transmembrane segments spans residues 49 to 69 (GGLV…LVLL), 103 to 123 (LFLA…AFVT), 136 to 156 (GFLG…WWVL), 187 to 207 (LVLA…LNLA), 221 to 241 (WAVL…DALT), and 242 to 262 (MVLV…VAVW).

The protein belongs to the TatC family. The Tat system comprises two distinct complexes: a TatABC complex, containing multiple copies of TatA, TatB and TatC subunits, and a separate TatA complex, containing only TatA subunits. Substrates initially bind to the TatABC complex, which probably triggers association of the separate TatA complex to form the active translocon.

Its subcellular location is the cell membrane. Its function is as follows. Part of the twin-arginine translocation (Tat) system that transports large folded proteins containing a characteristic twin-arginine motif in their signal peptide across membranes. Together with TatB, TatC is part of a receptor directly interacting with Tat signal peptides. The protein is Sec-independent protein translocase protein TatC of Xylanimonas cellulosilytica (strain DSM 15894 / JCM 12276 / CECT 5975 / KCTC 9989 / LMG 20990 / NBRC 107835 / XIL07).